Reading from the N-terminus, the 331-residue chain is HPr kinase/phosphorylase (331 aa).

Active-site residues include His-153 and Lys-174. An ATP-binding site is contributed by 168-175 (GKSGLGKS). Ser-175 contributes to the Mg(2+) binding site. The Proton acceptor; for phosphorylation activity. Proton donor; for dephosphorylation activity role is filled by Asp-192. Positions 217–226 (MEIRGLGVVD) are important for the catalytic mechanism of both phosphorylation and dephosphorylation. Position 218 (Glu-218) interacts with Mg(2+). The active site involves Arg-259. The segment at 280–285 (PIFPGK) is important for the catalytic mechanism of dephosphorylation.

Belongs to the HPrK/P family. In terms of assembly, homohexamer. The cofactor is Mg(2+).

The enzyme catalyses [HPr protein]-L-serine + ATP = [HPr protein]-O-phospho-L-serine + ADP + H(+). The catalysed reaction is [HPr protein]-O-phospho-L-serine + phosphate + H(+) = [HPr protein]-L-serine + diphosphate. Its function is as follows. Catalyzes the ATP- as well as the pyrophosphate-dependent phosphorylation of a specific serine residue in HPr, a phosphocarrier protein of the phosphoenolpyruvate-dependent sugar phosphotransferase system (PTS). HprK/P also catalyzes the pyrophosphate-producing, inorganic phosphate-dependent dephosphorylation (phosphorolysis) of seryl-phosphorylated HPr (P-Ser-HPr). This Pelodictyon phaeoclathratiforme (strain DSM 5477 / BU-1) protein is HPr kinase/phosphorylase.